We begin with the raw amino-acid sequence, 363 residues long: NAD(P)H-quinone oxidoreductase subunit 1, chloroplastic (363 aa).

The next 8 helical transmembrane spans lie at 30-50 (LFPI…IVWL), 98-118 (FSIG…VIPF), 127-147 (LSIG…GLLM), 165-185 (AAQS…ISLL), 203-223 (FWGW…ISSL), 248-268 (YSGI…LVSS), 300-320 (VFGT…FLFI), and 336-356 (LLNL…LLTT).

Belongs to the complex I subunit 1 family. In terms of assembly, NDH is composed of at least 16 different subunits, 5 of which are encoded in the nucleus.

The protein resides in the plastid. It is found in the chloroplast thylakoid membrane. The catalysed reaction is a plastoquinone + NADH + (n+1) H(+)(in) = a plastoquinol + NAD(+) + n H(+)(out). It catalyses the reaction a plastoquinone + NADPH + (n+1) H(+)(in) = a plastoquinol + NADP(+) + n H(+)(out). Functionally, NDH shuttles electrons from NAD(P)H:plastoquinone, via FMN and iron-sulfur (Fe-S) centers, to quinones in the photosynthetic chain and possibly in a chloroplast respiratory chain. The immediate electron acceptor for the enzyme in this species is believed to be plastoquinone. Couples the redox reaction to proton translocation, and thus conserves the redox energy in a proton gradient. In Nicotiana tomentosiformis (Tobacco), this protein is NAD(P)H-quinone oxidoreductase subunit 1, chloroplastic.